Here is a 128-residue protein sequence, read N- to C-terminus: Putative histidinol dehydrogenase (128 aa).

The tract at residues Q21–R84 is disordered. Basic and acidic residues-rich tracts occupy residues H34–A50 and Q72–S81.

The protein belongs to the histidinol dehydrogenase family.

The catalysed reaction is L-histidinol + 2 NAD(+) + H2O = L-histidine + 2 NADH + 3 H(+). It participates in amino-acid biosynthesis; L-histidine biosynthesis; L-histidine from 5-phospho-alpha-D-ribose 1-diphosphate: step 9/9. Functionally, catalyzes the sequential NAD-dependent oxidations of L-histidinol to L-histidinaldehyde and then to L-histidine. This chain is Putative histidinol dehydrogenase (hisD), found in Azospirillum brasilense.